Reading from the N-terminus, the 954-residue chain is Glycine dehydrogenase (decarboxylating) (954 aa).

Lysine 704 is subject to N6-(pyridoxal phosphate)lysine.

This sequence belongs to the GcvP family. The glycine cleavage system is composed of four proteins: P, T, L and H. Requires pyridoxal 5'-phosphate as cofactor.

The catalysed reaction is N(6)-[(R)-lipoyl]-L-lysyl-[glycine-cleavage complex H protein] + glycine + H(+) = N(6)-[(R)-S(8)-aminomethyldihydrolipoyl]-L-lysyl-[glycine-cleavage complex H protein] + CO2. Its function is as follows. The glycine cleavage system catalyzes the degradation of glycine. The P protein binds the alpha-amino group of glycine through its pyridoxal phosphate cofactor; CO(2) is released and the remaining methylamine moiety is then transferred to the lipoamide cofactor of the H protein. In Vibrio vulnificus (strain CMCP6), this protein is Glycine dehydrogenase (decarboxylating).